A 1001-amino-acid polypeptide reads, in one-letter code: Receptor-type tyrosine-protein phosphatase N2 (1001 aa).

An N-terminal signal peptide occupies residues 1–27 (MGPPLPLLLLLLLPPPLPRALPAPASA). The involved in localization to secretory granules; interaction with CPE stretch occupies residues 1 to 407 (MGPPLPLLLL…PEGPLLEKSS (407 aa)). Over 28–600 (RGRQLPGRLG…HQEEQEDSTK (573 aa)) the chain is Extracellular. Residue Arg-259 is modified to Omega-N-methylarginine. Disordered regions lie at residues 271-296 (PFSA…SMDD), 308-359 (QQNS…DAPE), and 394-459 (SPLL…LEDQ). The span at 312–325 (EVDRLGPLKEEKAD) shows a compositional bias: basic and acidic residues. Residue Ser-339 is modified to Phosphoserine. Positions 340 to 355 (QESHGRGAEGQPREQT) are enriched in basic and acidic residues. The segment covering 394–404 (SPLLPEGPLLE) has biased composition (low complexity). Basic and acidic residues predominate over residues 405 to 416 (KSSREEIKKSEQ). Acidic residues predominate over residues 417–428 (PEEVLSSEEETA). Phosphoserine occurs at positions 422 and 423. Residues 429–459 (GVEHVRSRTYSKDLFERKPNSEPQPRRLEDQ) are compositionally biased toward basic and acidic residues. Asn-550 carries an N-linked (GlcNAc...) asparagine glycan. Residues 601–621 (FILLTFLSIACILGVLLASSL) traverse the membrane as a helical segment. The Cytoplasmic segment spans residues 622–1001 (AYCLRHNSHY…VNAILKALPQ (380 aa)). The Tyrosine-based internalization motif signature appears at 652-661 (YQELCRQRMA). The segment at 663–705 (RPQDRSEGPHTSRINSVSSQFSDGPMPSPSARSSTSSWSEEPV) is disordered. Over residues 674 to 684 (SRINSVSSQFS) the composition is skewed to polar residues. Residues Ser-678 and Ser-684 each carry the phosphoserine modification. The segment covering 691-705 (PSARSSTSSWSEEPV) has biased composition (low complexity). A Phosphothreonine modification is found at Thr-697. Residues 731-991 (LEKEWEALCA…EFALTAVAEE (261 aa)) form the Tyrosine-protein phosphatase domain. Residues Asp-899 and 931 to 937 (CSDGAGR) contribute to the substrate site. Catalysis depends on Cys-931, which acts as the Phosphocysteine intermediate. N6-acetyllysine is present on Lys-956. Gln-976 contacts substrate. The Leucine-based sorting signal motif lies at 990-996 (EEVNAIL).

It belongs to the protein-tyrosine phosphatase family. In terms of assembly, self-associates. Interacts (via cytoplasmic domain) with PTPRN (via cytoplasmic domain). Interacts (precursor form) with CPE. Interacts with HAP1 isoform A. Interacts with AP2A1 or AP2A2 and AP1G1; indicative for an association with adaptor protein complex 2 (AP-2) and adaptor protein complex 1 (AP-1). Interacts with AP2M1; indicative for an association with adaptor protein complex 2 (AP-2). Interacts with MYO5A. Subject to proteolytic cleavage at multiple sites during maturation of secretory granules. In the brain at least IA-2beta71, IA-2beta64 and IA-2beta60 have been detected, in the pancreas and a pancreatic beta cell line only IA-2beta60 has been detected. In terms of tissue distribution, detected in brain. Detected in pancreas islets (at protein level). Detected in pancreas and brain.

Its subcellular location is the cytoplasmic vesicle. It is found in the secretory vesicle membrane. The protein localises to the secretory vesicle. It localises to the synaptic vesicle membrane. The catalysed reaction is O-phospho-L-tyrosyl-[protein] + H2O = L-tyrosyl-[protein] + phosphate. Functionally, plays a role in vesicle-mediated secretory processes. Required for normal accumulation of secretory vesicles in hippocampus, pituitary and pancreatic islets. Required for the accumulation of normal levels of insulin-containing vesicles and preventing their degradation. Plays a role in insulin secretion in response to glucose stimuli. Required for normal accumulation of the neurotransmitters norepinephrine, dopamine and serotonin in the brain. In females, but not in males, required for normal accumulation and secretion of pituitary hormones, such as luteinizing hormone (LH) and follicle-stimulating hormone (FSH). Required to maintain normal levels of renin expression and renin release. May regulate catalytic active protein-tyrosine phosphatases such as PTPRA through dimerization. Has phosphatidylinositol phosphatase activity; the PIPase activity is involved in its ability to regulate insulin secretion. Can dephosphorylate phosphatidylinositol 4,5-biphosphate (PI(4,5)P2), phosphatidylinositol 5-phosphate and phosphatidylinositol 3-phosphate. Regulates PI(4,5)P2 level in the plasma membrane and localization of cofilin at the plasma membrane and thus is indirectly involved in regulation of actin dynamics related to cell migration and metastasis; upon hydrolysis of PI(4,5)P2 cofilin is released from the plasma membrane and acts in the cytoplasm in severing F-actin filaments. The sequence is that of Receptor-type tyrosine-protein phosphatase N2 (Ptprn2) from Mus musculus (Mouse).